The sequence spans 765 residues: Phosphoribosylformylglycinamidine synthase subunit PurL (765 aa).

The active site involves His57. 2 residues coordinate ATP: Tyr60 and Arg104. A Mg(2+)-binding site is contributed by Glu106. Substrate-binding positions include 107–110 and Arg129; that span reads SHNH. His108 acts as the Proton acceptor in catalysis. Position 130 (Asp130) interacts with Mg(2+). Gln254 provides a ligand contact to substrate. Asp282 serves as a coordination point for Mg(2+). Residue 326–328 participates in substrate binding; sequence ESQ. ATP contacts are provided by Asn508 and Gly545. Asn546 contacts Mg(2+). Ser548 provides a ligand contact to substrate.

This sequence belongs to the FGAMS family. Monomer. Part of the FGAM synthase complex composed of 1 PurL, 1 PurQ and 2 PurS subunits.

It localises to the cytoplasm. It carries out the reaction N(2)-formyl-N(1)-(5-phospho-beta-D-ribosyl)glycinamide + L-glutamine + ATP + H2O = 2-formamido-N(1)-(5-O-phospho-beta-D-ribosyl)acetamidine + L-glutamate + ADP + phosphate + H(+). It functions in the pathway purine metabolism; IMP biosynthesis via de novo pathway; 5-amino-1-(5-phospho-D-ribosyl)imidazole from N(2)-formyl-N(1)-(5-phospho-D-ribosyl)glycinamide: step 1/2. In terms of biological role, part of the phosphoribosylformylglycinamidine synthase complex involved in the purines biosynthetic pathway. Catalyzes the ATP-dependent conversion of formylglycinamide ribonucleotide (FGAR) and glutamine to yield formylglycinamidine ribonucleotide (FGAM) and glutamate. The FGAM synthase complex is composed of three subunits. PurQ produces an ammonia molecule by converting glutamine to glutamate. PurL transfers the ammonia molecule to FGAR to form FGAM in an ATP-dependent manner. PurS interacts with PurQ and PurL and is thought to assist in the transfer of the ammonia molecule from PurQ to PurL. In Corynebacterium aurimucosum (strain ATCC 700975 / DSM 44827 / CIP 107346 / CN-1) (Corynebacterium nigricans), this protein is Phosphoribosylformylglycinamidine synthase subunit PurL.